We begin with the raw amino-acid sequence, 484 residues long: Glutamyl-tRNA(Gln) amidotransferase subunit A (484 aa).

Catalysis depends on charge relay system residues K77 and S152. S176 functions as the Acyl-ester intermediate in the catalytic mechanism.

It belongs to the amidase family. GatA subfamily. In terms of assembly, heterotrimer of A, B and C subunits.

It carries out the reaction L-glutamyl-tRNA(Gln) + L-glutamine + ATP + H2O = L-glutaminyl-tRNA(Gln) + L-glutamate + ADP + phosphate + H(+). Its function is as follows. Allows the formation of correctly charged Gln-tRNA(Gln) through the transamidation of misacylated Glu-tRNA(Gln) in organisms which lack glutaminyl-tRNA synthetase. The reaction takes place in the presence of glutamine and ATP through an activated gamma-phospho-Glu-tRNA(Gln). The polypeptide is Glutamyl-tRNA(Gln) amidotransferase subunit A (Pseudomonas aeruginosa (strain LESB58)).